Here is a 415-residue protein sequence, read N- to C-terminus: Sensor protein kinase WalK (415 aa).

Residues 11-63 (RTITKPITDMRNQTVEMSRGNYTQRVKIYGNDEIGELALAFNNLSKRVQEAQA) enclose the HAMP domain. The 71-residue stretch at 68-138 (EKRRLDSVIT…EIQENNDSFL (71 aa)) folds into the PAS domain. Zn(2+) contacts are provided by His-78, Asp-81, His-171, and Glu-175. Positions 121–185 (LEDEFKLEEI…QQQVERERRE (65 aa)) constitute a PAC domain. Positions 189–407 (NVSHELRTPL…SIFITLPCEV (219 aa)) constitute a Histidine kinase domain. His-192 carries the phosphohistidine; by autocatalysis modification.

As to quaternary structure, forms homodimers. Forms homooligomers. Requires NH4(+) as cofactor. Post-translationally, autophosphorylated.

Its subcellular location is the cell membrane. The catalysed reaction is ATP + protein L-histidine = ADP + protein N-phospho-L-histidine.. By zinc. Zinc-binding negatively regulates WalK kinase activity and thus autophosphorylation. Its function is as follows. Member of the two-component regulatory system WalK/WalR that regulates genes involved in cell wall metabolism, virulence regulation, biofilm production, oxidative stress resistance and antibiotic resistance via direct or indirect regulation of autolysins. Functions as a sensor protein kinase which is autophosphorylated at a histidine residue in the dimerization domain and transfers its phosphate group to the conserved aspartic acid residue in the regulatory domain of WalR. In turn, WalR binds to the upstream promoter regions of the target genes to positively and negatively regulate their expression. The polypeptide is Sensor protein kinase WalK (walK) (Staphylococcus aureus).